Here is a 279-residue protein sequence, read N- to C-terminus: Diaminopimelate epimerase 1 (279 aa).

Asn-13 and Asn-66 together coordinate substrate. Cys-75 acts as the Proton donor in catalysis. Residues 76-77 (GN), Asn-164, Asn-197, and 215-216 (ER) each bind substrate. Catalysis depends on Cys-224, which acts as the Proton acceptor. 225–226 (GT) serves as a coordination point for substrate.

Belongs to the diaminopimelate epimerase family. Homodimer.

Its subcellular location is the cytoplasm. It carries out the reaction (2S,6S)-2,6-diaminopimelate = meso-2,6-diaminopimelate. Its pathway is amino-acid biosynthesis; L-lysine biosynthesis via DAP pathway; DL-2,6-diaminopimelate from LL-2,6-diaminopimelate: step 1/1. Its function is as follows. Catalyzes the stereoinversion of LL-2,6-diaminopimelate (L,L-DAP) to meso-diaminopimelate (meso-DAP), a precursor of L-lysine and an essential component of the bacterial peptidoglycan. The chain is Diaminopimelate epimerase 1 from Nostoc sp. (strain PCC 7120 / SAG 25.82 / UTEX 2576).